The sequence spans 537 residues: Zinc metalloproteinase nas-23 (537 aa).

Positions 1–16 (MRFLILVLAGSIGIYG) are cleaved as a signal peptide. A propeptide spanning residues 17 to 111 (VNLPKIPKLS…EQLDHSRTKR (95 aa)) is cleaved from the precursor. N-linked (GlcNAc...) asparagine glycosylation is present at Asn77. The region spanning 116 to 311 (NAMYPKTIWL…AKINRHYNCE (196 aa)) is the Peptidase M12A domain. 6 disulfides stabilise this stretch: Cys156/Cys310, Cys178/Cys199, Cys314/Cys334, Cys336/Cys345, Cys356/Cys385, and Cys412/Cys433. Residue His207 coordinates Zn(2+). Glu208 is a catalytic residue. Zn(2+) contacts are provided by His211 and His217. One can recognise an EGF-like domain in the interval 306-346 (RHYNCEKNCKNKITCLNGGYQHPKNCKICVCPPGYGGSDCK). One can recognise a CUB domain in the interval 356–471 (CTGVLVAGET…VQLRYSTVDG (116 aa)). Asn481 carries an N-linked (GlcNAc...) asparagine glycan.

Zn(2+) is required as a cofactor. In terms of tissue distribution, expressed in the hypodermis, rectum and to a lesser extent in pharyngeal muscles and intestine.

It localises to the secreted. Functionally, metalloprotease. This is Zinc metalloproteinase nas-23 (nas-23) from Caenorhabditis elegans.